A 591-amino-acid chain; its full sequence is MHAYRSHTCTELNAAHVGQEVRLSGWVHRVRDHGGVLFLDLRDHYGITQVIADADSPAFAELETVRAEWVIRIEGRVKARDASLVNPKLATGEIEVYATGMSVLGAADELPLPVFGETDYPEETRLTYRFLDLRREKLHQNMMLRSNVVRSLRNRMWGAGFNEFQTPIITASSPEGARDFLVPSRLHPGKFYALPQAPQQFKQLIMVAGFDRYFQIAPCFRDEDPRADRSPTDFYQLDIEMSFVEQEDVFAAVQPVIQGLFEEFGHGKRVEADWPRIAYRDAMLWYGSDKPDLRNPIKMQVVSEHFAGSGFAIFAKLLENEGTEIRAIPAPTGGSRKFCDRMNAFAQSQGLPGMGYIFWRKGDDGAMEAAGPLAKNIGPERTEAIRQQLGLGEGDAAFFLGGKPETFEAVAGRARTEIGRELGLTEENCFKFAWIVDFPMYEKDDEGKIDFSHNPFSMPQGGMEALEGDPLKVHAYQYDLACNGYELISGGIRNHKPEIMFKAFELAGYPKEEVEKRFGGMVKAFRYGAPPHGGCAAGIDRIVMLLADEANIREVIMFPMNQRAEDLLMGAPSEPTNEQLRELRLRVVPKD.

L-aspartate is bound at residue E175. The aspartate stretch occupies residues 199 to 202; that stretch reads QQFK. 2 residues coordinate L-aspartate: R221 and H453. Residue 221–223 participates in ATP binding; it reads RDE. E486 lines the ATP pocket. R493 is an L-aspartate binding site. 538–541 lines the ATP pocket; that stretch reads GIDR.

The protein belongs to the class-II aminoacyl-tRNA synthetase family. Type 1 subfamily. Homodimer.

It localises to the cytoplasm. The enzyme catalyses tRNA(Asx) + L-aspartate + ATP = L-aspartyl-tRNA(Asx) + AMP + diphosphate. In terms of biological role, aspartyl-tRNA synthetase with relaxed tRNA specificity since it is able to aspartylate not only its cognate tRNA(Asp) but also tRNA(Asn). Reaction proceeds in two steps: L-aspartate is first activated by ATP to form Asp-AMP and then transferred to the acceptor end of tRNA(Asp/Asn). The protein is Aspartate--tRNA(Asp/Asn) ligase of Cereibacter sphaeroides (strain KD131 / KCTC 12085) (Rhodobacter sphaeroides).